Consider the following 394-residue polypeptide: Argininosuccinate synthase (394 aa).

Residues 7–15 and Ala35 each bind ATP; that span reads AYSGGLDTS. Tyr85 lines the L-citrulline pocket. Gly115 is a binding site for ATP. L-aspartate-binding residues include Thr117, Asn121, and Asp122. L-citrulline is bound at residue Asn121. 5 residues coordinate L-citrulline: Arg125, Ser174, Ser183, Glu258, and Tyr270.

Belongs to the argininosuccinate synthase family. Type 1 subfamily. Homotetramer.

Its subcellular location is the cytoplasm. The enzyme catalyses L-citrulline + L-aspartate + ATP = 2-(N(omega)-L-arginino)succinate + AMP + diphosphate + H(+). Its pathway is amino-acid biosynthesis; L-arginine biosynthesis; L-arginine from L-ornithine and carbamoyl phosphate: step 2/3. The chain is Argininosuccinate synthase from Methanopyrus kandleri (strain AV19 / DSM 6324 / JCM 9639 / NBRC 100938).